Reading from the N-terminus, the 290-residue chain is Aquaporin-3 (290 aa).

The Cytoplasmic segment spans residues 1 to 24; that stretch reads MGRQKELVTRCGEMLHIRYRLLRQ. The helical transmembrane segment at 25 to 42 threads the bilayer; sequence ALAECLGTLILVMFGCGS. Residues 43 to 56 are Extracellular-facing; sequence VAQVVLSRGTHGGF. A helical transmembrane segment spans residues 57 to 74; that stretch reads LTINLAFGFAVTLGILVA. The Cytoplasmic segment spans residues 75–78; the sequence is GQVS. An intramembrane region (discontinuously helical) is located at residues 79–92; that stretch reads GAHLNPAVTFAMCF. The NPA 1 signature appears at 83–85; sequence NPA. The Cytoplasmic segment spans residues 93-100; that stretch reads LAREPWIK. Residues 101–121 form a helical membrane-spanning segment; that stretch reads LPVYTLAQTLGAFLGAGIIFG. The Extracellular portion of the chain corresponds to 122 to 159; the sequence is LYYDAIWAFANNQLIVSGPNGTAGIFATYPSGHLDMVN. N-linked (GlcNAc...) asparagine glycosylation is present at asparagine 141. The helical transmembrane segment at 160–177 threads the bilayer; the sequence is GFFDQFIGTASLIVCVLA. Topologically, residues 178–189 are cytoplasmic; sequence IVDPNNNPVPRG. A helical membrane pass occupies residues 190-206; sequence LEAFTVGLVVLVIGTSM. Residues 207-210 are Extracellular-facing; sequence GFNS. An intramembrane region (discontinuously helical) is located at residues 211–224; that stretch reads GYAVNPARDFGPRL. The short motif at 215 to 217 is the NPA 2 element; it reads NPA. The Extracellular portion of the chain corresponds to 225-242; the sequence is FTAIAGWGSEVFTTGRHW. A helical transmembrane segment spans residues 243–264; sequence WWVPIASPLLGSIAGVFVYQLM. Topologically, residues 265–290 are cytoplasmic; the sequence is IGCHLEPPPPSTDEENVKLSQVKHKE.

This sequence belongs to the MIP/aquaporin (TC 1.A.8) family. As to quaternary structure, homotetramer; each monomer provides an independent glycerol/water pore. Could also exist in other oligomeric states. In terms of tissue distribution, highly expressed in stomach and spleen, with lower expression in kidney and lung.

It is found in the cell membrane. Its subcellular location is the basolateral cell membrane. The catalysed reaction is glycerol(in) = glycerol(out). It catalyses the reaction H2O(in) = H2O(out). The enzyme catalyses urea(in) = urea(out). It carries out the reaction H2O2(out) = H2O2(in). Its function is as follows. Aquaglyceroporins form homotetrameric transmembrane channels, with each monomer independently mediating glycerol and water transport across the plasma membrane along their osmotic gradient. Could also be permeable to urea. Also participates in cell permeability to H2O2 and H2O2-mediated signaling. In skin, transports glycerol to the epidermis and stratum corneum, where it maintains hydration, elasticity, and supports lipid biosynthesis for barrier repair. In kidney, contributes to the reabsorption of water, helping the body maintain proper fluid balance. This Sus scrofa (Pig) protein is Aquaporin-3.